We begin with the raw amino-acid sequence, 284 residues long: Ribose-phosphate pyrophosphokinase (284 aa).

Residues 34–36 and 92–93 each bind ATP; these read DNE and RQ. Mg(2+) contacts are provided by histidine 125 and aspartate 163. Residue lysine 186 is part of the active site. D-ribose 5-phosphate-binding positions include arginine 188, aspartate 212, and 216-220; that span reads STGGT.

It belongs to the ribose-phosphate pyrophosphokinase family. Class III (archaeal) subfamily. Homotetramer. Mg(2+) is required as a cofactor.

The protein localises to the cytoplasm. The enzyme catalyses D-ribose 5-phosphate + ATP = 5-phospho-alpha-D-ribose 1-diphosphate + AMP + H(+). It functions in the pathway metabolic intermediate biosynthesis; 5-phospho-alpha-D-ribose 1-diphosphate biosynthesis; 5-phospho-alpha-D-ribose 1-diphosphate from D-ribose 5-phosphate (route I): step 1/1. Its activity is regulated as follows. Activated by inorganic phosphate, with a maximal activity at 190 mM. Above this concentration inorganic phosphate progressively inhibits the kinase. Completely inhibited by ADP, and partially inhibited by alpha,beta-methylene ATP (mATP). Lack of allosteric regulation. Involved in the biosynthesis of the central metabolite phospho-alpha-D-ribosyl-1-pyrophosphate (PRPP) via the transfer of pyrophosphoryl group from ATP to 1-hydroxyl of ribose-5-phosphate (Rib-5-P). It can also use dATP as diphosphoryl donor. The chain is Ribose-phosphate pyrophosphokinase from Methanocaldococcus jannaschii (strain ATCC 43067 / DSM 2661 / JAL-1 / JCM 10045 / NBRC 100440) (Methanococcus jannaschii).